The following is a 350-amino-acid chain: S-adenosylmethionine:tRNA ribosyltransferase-isomerase (350 aa).

Belongs to the QueA family. As to quaternary structure, monomer.

It is found in the cytoplasm. It carries out the reaction 7-aminomethyl-7-carbaguanosine(34) in tRNA + S-adenosyl-L-methionine = epoxyqueuosine(34) in tRNA + adenine + L-methionine + 2 H(+). The protein operates within tRNA modification; tRNA-queuosine biosynthesis. Functionally, transfers and isomerizes the ribose moiety from AdoMet to the 7-aminomethyl group of 7-deazaguanine (preQ1-tRNA) to give epoxyqueuosine (oQ-tRNA). The sequence is that of S-adenosylmethionine:tRNA ribosyltransferase-isomerase from Vibrio parahaemolyticus serotype O3:K6 (strain RIMD 2210633).